The chain runs to 465 residues: Probable citrate synthase, mitochondrial (465 aa).

Active-site residues include His303, His349, and Asp404.

It belongs to the citrate synthase family. Homodimer.

It is found in the mitochondrion matrix. The catalysed reaction is oxaloacetate + acetyl-CoA + H2O = citrate + CoA + H(+). Its pathway is carbohydrate metabolism; tricarboxylic acid cycle; isocitrate from oxaloacetate: step 1/2. This Glossina morsitans morsitans (Savannah tsetse fly) protein is Probable citrate synthase, mitochondrial.